Reading from the N-terminus, the 34-residue chain is Mu-theraphotoxin-CCy1a (34 aa).

Disulfide bonds link C3/C18, C10/C23, and C17/C30.

Belongs to the neurotoxin 10 (Hwtx-1) family. 14 (Hntx-1) subfamily. As to expression, expressed by the venom gland.

The protein localises to the secreted. Voltage-gated sodium channel Nav1.7/SCN9A inhibitor. In Chromatopelma cyaneopubescens (Greenbottle blue tarantula), this protein is Mu-theraphotoxin-CCy1a.